The chain runs to 323 residues: tRNA dimethylallyltransferase (323 aa).

13 to 20 is an ATP binding site; that stretch reads GPTASGKT. A substrate-binding site is contributed by 15-20; sequence TASGKT. 4 interaction with substrate tRNA regions span residues 42–45, 166–170, 251–256, and 284–291; these read DSAL, QRIQR, RCVGYR, and KRQITWLR.

It belongs to the IPP transferase family. In terms of assembly, monomer. Mg(2+) serves as cofactor.

The enzyme catalyses adenosine(37) in tRNA + dimethylallyl diphosphate = N(6)-dimethylallyladenosine(37) in tRNA + diphosphate. In terms of biological role, catalyzes the transfer of a dimethylallyl group onto the adenine at position 37 in tRNAs that read codons beginning with uridine, leading to the formation of N6-(dimethylallyl)adenosine (i(6)A). The protein is tRNA dimethylallyltransferase of Acidovorax sp. (strain JS42).